The following is a 97-amino-acid chain: UPF0235 protein DET1292 (97 aa).

It belongs to the UPF0235 family.

The protein is UPF0235 protein DET1292 of Dehalococcoides mccartyi (strain ATCC BAA-2266 / KCTC 15142 / 195) (Dehalococcoides ethenogenes (strain 195)).